We begin with the raw amino-acid sequence, 494 residues long: Alpha-amylase-related protein (494 aa).

An N-terminal signal peptide occupies residues 1 to 20 (MFKFALALTLCLAGASLSLA). Q21 bears the Pyrrolidone carboxylic acid mark. A disulfide bridge connects residues C48 and C104. 3 residues coordinate Ca(2+): N118, Q169, and D178. C157 and C171 are oxidised to a cystine. Position 206 (R206) interacts with chloride. The active-site Nucleophile is the D208. H212 is a Ca(2+) binding site. E245 acts as the Proton donor in catalysis. Positions 308 and 343 each coordinate chloride. Intrachain disulfides connect C376-C382, C418-C441, and C448-C460.

Belongs to the glycosyl hydrolase 13 family. In terms of assembly, monomer. Ca(2+) serves as cofactor. Requires chloride as cofactor.

The protein localises to the secreted. The catalysed reaction is Endohydrolysis of (1-&gt;4)-alpha-D-glucosidic linkages in polysaccharides containing three or more (1-&gt;4)-alpha-linked D-glucose units.. The polypeptide is Alpha-amylase-related protein (Amyrel) (Drosophila dossoui (Fruit fly)).